The primary structure comprises 484 residues: Cobyric acid synthase (484 aa).

One can recognise a GATase cobBQ-type domain in the interval 251-438 (ALKIAVPVLP…LHGLFASDAY (188 aa)). C333 functions as the Nucleophile in the catalytic mechanism. The active site involves H430.

This sequence belongs to the CobB/CobQ family. CobQ subfamily.

The protein operates within cofactor biosynthesis; adenosylcobalamin biosynthesis. Its function is as follows. Catalyzes amidations at positions B, D, E, and G on adenosylcobyrinic A,C-diamide. NH(2) groups are provided by glutamine, and one molecule of ATP is hydrogenolyzed for each amidation. This chain is Cobyric acid synthase, found in Rhizobium etli (strain CIAT 652).